Reading from the N-terminus, the 72-residue chain is Translation initiation factor IF-1 (72 aa).

In terms of domain architecture, S1-like spans 1 to 72; that stretch reads MSKEDMIEFS…SKGRITFRFK (72 aa).

The protein belongs to the IF-1 family. Component of the 30S ribosomal translation pre-initiation complex which assembles on the 30S ribosome in the order IF-2 and IF-3, IF-1 and N-formylmethionyl-tRNA(fMet); mRNA recruitment can occur at any time during PIC assembly.

It localises to the cytoplasm. Functionally, one of the essential components for the initiation of protein synthesis. Stabilizes the binding of IF-2 and IF-3 on the 30S subunit to which N-formylmethionyl-tRNA(fMet) subsequently binds. Helps modulate mRNA selection, yielding the 30S pre-initiation complex (PIC). Upon addition of the 50S ribosomal subunit IF-1, IF-2 and IF-3 are released leaving the mature 70S translation initiation complex. The chain is Translation initiation factor IF-1 from Gluconacetobacter diazotrophicus (strain ATCC 49037 / DSM 5601 / CCUG 37298 / CIP 103539 / LMG 7603 / PAl5).